The chain runs to 119 residues: Large ribosomal subunit protein bL20 (119 aa).

It belongs to the bacterial ribosomal protein bL20 family.

Functionally, binds directly to 23S ribosomal RNA and is necessary for the in vitro assembly process of the 50S ribosomal subunit. It is not involved in the protein synthesizing functions of that subunit. The sequence is that of Large ribosomal subunit protein bL20 (rplT) from Geobacillus stearothermophilus (Bacillus stearothermophilus).